Consider the following 440-residue polypeptide: Serine/threonine-protein kinase toxin HipA (440 aa).

Serine 150 is subject to Phosphoserine; by autocatalysis. ATP-binding positions include 152–157, lysine 181, and 234–236; these read AGAQEK and ERF. Aspartate 309 (proton acceptor) is an active-site residue. Residues 311–314 and 331–332 each bind ATP; these read HAKN and YD. A DNA-binding region spans residues 379–382; that stretch reads KVLR.

It belongs to the HipA Ser/Thr kinase family. Forms a HipA(2)HipB(2) heterotetramer which can interact with a single operator on DNA. When 2 operators are present each HipB dimer contacts 1 HipA molecule, which are brought together by the DNA bend and dimerize, blocking the HipA active site and inactivating its toxic activity. Mutations present in allele hipA7 (G22S and D291A) decrease the affinity of HipA for HipB. Post-translationally, autophosphorylates intermolecularly on Ser-150; phosphorylated form not seen to bind ATP and no longer has kinase activity.

It carries out the reaction L-seryl-[protein] + ATP = O-phospho-L-seryl-[protein] + ADP + H(+). The catalysed reaction is L-threonyl-[protein] + ATP = O-phospho-L-threonyl-[protein] + ADP + H(+). With respect to regulation, once phosphorylated no longer has kinase activity. Toxic component of a type II toxin-antitoxin (TA) system, first identified by mutations that increase production of persister cells, a fraction of cells that are phenotypic variants not killed by antibiotics, which lead to multidrug tolerance. Persistence may be ultimately due to global remodeling of the persister cell's ribosomes. Phosphorylates Glu-tRNA-ligase (AC P04805, gltX, on 'Ser-239') in vivo. Phosphorylation of GltX prevents it from being charged, leading to an increase in uncharged tRNA(Glu). This induces amino acid starvation and the stringent response via RelA/SpoT and increased (p)ppGpp levels, which inhibits replication, transcription, translation and cell wall synthesis, reducing growth and leading to persistence and multidrug resistance. Once the level of HipA exceeds a threshold cells become dormant, and the length of dormancy is determined by how much HipA levels exceed the threshold. The hipA7 mutation (a double G22S D291A mutation) leads to increased generation of persister cells (cells that survive antibiotic treatment) probably by entering into a dormant state, as well as cold-sensitivity. Wild-type cells produce persisters at a frequency of 10(-6) to 10(-5) whereas hipA7 cells produce about 100-fold more persisters. hipA7 decreases the affinity for antitoxin HipB, leading to increased HipA levels and persistence; depending on the protein level, can be toxic enough to reduce cell growth or even kill cells. Generation of persister cells requires (p)ppGpp as cells lacking relA or relA/spoT generate fewer or no persister cells respectively compared to hipA7. The toxic effect of HipA is neutralized by its cognate antitoxin HipB. Also neutralized by overexpression of gltX. With HipB acts as a corepressor for transcription of the hipBA promoter; binding of HipA-HipB to DNA induces a 70 degree bend. This brings together and dimerizes 2 HipA molecules, which distorts the promoter region, preventing sigma-factor binding; additionally HipA and HipB would physically prevent RNA core polymerase from contacting the -35 promoter box. May play a role in biofilm formation. The chain is Serine/threonine-protein kinase toxin HipA (hipA) from Escherichia coli (strain K12).